Consider the following 396-residue polypeptide: Bifunctional enzyme Fae/Hps (396 aa).

Positions 1-161 are formaldehyde-activating enzyme; it reads MYQIGEALIG…YEKDRGVHAI (161 aa). The Proton donor role is filled by His-17. Asp-19, Leu-48, Lys-66, Thr-68, and Gln-83 together coordinate substrate. The segment at 162–396 is 3-hexulose-6-phosphate synthase; sequence MGYKITRLWD…IDQYRIMTDF (235 aa).

This sequence in the N-terminal section; belongs to the formaldehyde-activating enzyme family. It in the C-terminal section; belongs to the HPS/KGPDC family. HPS subfamily.

The enzyme catalyses 5,6,7,8-tetrahydromethanopterin + formaldehyde = 5,10-methylenetetrahydromethanopterin + H2O. It catalyses the reaction D-ribulose 5-phosphate + formaldehyde = D-arabino-hex-3-ulose 6-phosphate. It participates in carbohydrate biosynthesis; D-ribose 5-phosphate biosynthesis. Functionally, catalyzes the condensation of formaldehyde with tetrahydromethanopterin (H(4)MPT) to 5,10-methylenetetrahydromethanopterin. Catalyzes the reversible formation of ribulose-5-phosphate and formaldehyde from 3-hexulose-6-phosphate. In Methanocella arvoryzae (strain DSM 22066 / NBRC 105507 / MRE50), this protein is Bifunctional enzyme Fae/Hps.